Consider the following 1318-residue polypeptide: Uromodulin-like 1 (1318 aa).

Positions 1 to 21 (MLRTSGLALLALVSAVGPSQA) are cleaved as a signal peptide. At 22–1272 (SGFTEKGLSL…HAEAGLGAGY (1251 aa)) the chain is on the extracellular side. In terms of domain architecture, EMI spans 33–106 (GYQLCSHRVT…YEQLGLYCVL (74 aa)). 3 disulfide bridges follow: Cys37–Cys94, Cys61–Cys70, and Cys93–Cys104. Asn89 carries N-linked (GlcNAc...) asparagine glycosylation. Asn109 is a glycosylation site (N-linked (GlcNAc...) asparagine). The WAP domain maps to 114 to 158 (FTSRPGACPAEGPEPSTSPCSLDIDCPGLEKCCPWSGGRYCMAPA). Asn172 carries an N-linked (GlcNAc...) asparagine glycan. The 50-residue stretch at 264 to 313 (DVNECFYEELNACSGRELCANLEGSYWCVCHQEAPATSPRKLNLEWEDCP) folds into the EGF-like 1; calcium-binding domain. The 85-residue stretch at 314 to 398 (PVSDYVVLNV…TTLTIKTNAQ (85 aa)) folds into the Fibronectin type-III 1 domain. 3 N-linked (GlcNAc...) asparagine glycosylation sites follow: Asn322, Asn335, and Asn417. The SEA 1 domain maps to 396-510 (NAQVFEVTIK…QGTRVQDWDE (115 aa)). Residues 507–552 (DWDECVDSAEHDCSPAAWCINLEGSYTCQCRTTRDATPSRAGRACE) form the EGF-like 2; calcium-binding domain. 3 disulfides stabilise this stretch: Cys511–Cys525, Cys519–Cys534, and Cys536–Cys551. The N-linked (GlcNAc...) asparagine glycan is linked to Asn585. Residues 593 to 655 (GYPQGTPAAG…PSPTEDPTGH (63 aa)) are disordered. The Fibronectin type-III 2 domain maps to 702–791 (VPVSIGRIMV…HLKVRTAARK (90 aa)). Asn713 is a glycosylation site (N-linked (GlcNAc...) asparagine). In terms of domain architecture, SEA 2 spans 788-900 (AARKLIGKVR…GDTFIQDYDE (113 aa)). Residues 897–938 (DYDECERKEDDCVPGTSCRNTLGSFTCSCEGGAPDFPVEYSE) form the EGF-like 3; calcium-binding domain. 2 cysteine pairs are disulfide-bonded: Cys901–Cys914 and Cys908–Cys923. Residues 938-957 (ERPCEGDSPGNETWATSPER) form a disordered region. Residues Asn984 and Asn1050 are each glycosylated (N-linked (GlcNAc...) asparagine). The region spanning 992–1235 (LCEIEKVVVA…ATCKINCNNF (244 aa)) is the ZP domain. Cys1157 and Cys1215 form a disulfide bridge. The helical transmembrane segment at 1273–1293 (VVLIVVAIFVLVAGTATLLIV) threads the bilayer. Topologically, residues 1294-1318 (RYQRMNGRYNFKIQSNNFSYQVFYE) are cytoplasmic.

As to expression, isoform 4 is expressed at low level in kidney, testis and fetal thymus. Isoform 3 is expressed at low level in prostate, testis and fetal thymus.

Its subcellular location is the cell membrane. The protein localises to the cytoplasm. This chain is Uromodulin-like 1 (UMODL1), found in Homo sapiens (Human).